Here is a 272-residue protein sequence, read N- to C-terminus: MPVVSLAQLLESGVHFGHQTRRWNPRMSQYIFTERNGVHIIDLVQTAQLMDEAYNYIRTASEQGKKFLFVGTKRQAAGIIAQEATRCGGYYINQRWLGGMLTNWTTIKTRVERLKDLERREESKALDLLPKKEASVLRREMAKLQKYLGGIKNMRRLPDGVIMVDQRREYNAVQECQKLNIPIVSLLDTNCDPTQVDIPIPANDDAIRSIKLIVGKLADAIYEGRHGQLEADYEDYYEDYEEYEDDYEGAEGDLDLDSANEEESLEDNNEEE.

Positions 244–272 (EDDYEGAEGDLDLDSANEEESLEDNNEEE) are disordered.

This sequence belongs to the universal ribosomal protein uS2 family.

This chain is Small ribosomal subunit protein uS2, found in Trichodesmium erythraeum (strain IMS101).